The sequence spans 823 residues: Valine--tRNA ligase (823 aa).

Positions 52–62 (PTVSGVLHMGH) match the 'HIGH' region motif. The short motif at 549 to 553 (KMSKS) is the 'KMSKS' region element. An ATP-binding site is contributed by lysine 552.

It belongs to the class-I aminoacyl-tRNA synthetase family. ValS type 2 subfamily. Monomer.

It is found in the cytoplasm. The enzyme catalyses tRNA(Val) + L-valine + ATP = L-valyl-tRNA(Val) + AMP + diphosphate. Catalyzes the attachment of valine to tRNA(Val). As ValRS can inadvertently accommodate and process structurally similar amino acids such as threonine, to avoid such errors, it has a 'posttransfer' editing activity that hydrolyzes mischarged Thr-tRNA(Val) in a tRNA-dependent manner. The chain is Valine--tRNA ligase from Anaplasma marginale (strain St. Maries).